The chain runs to 197 residues: Recombination protein RecR (197 aa).

A C4-type zinc finger spans residues 57 to 72 (CSVCFAITEDDPCWIC). The region spanning 79-174 (GTICVVEEPQ…KVTRLAHGIP (96 aa)) is the Toprim domain.

It belongs to the RecR family.

Its function is as follows. May play a role in DNA repair. It seems to be involved in an RecBC-independent recombinational process of DNA repair. It may act with RecF and RecO. In Geobacter sp. (strain M21), this protein is Recombination protein RecR.